The sequence spans 333 residues: DNA-directed RNA polymerase subunit alpha (333 aa).

The alpha N-terminal domain (alpha-NTD) stretch occupies residues 1–235; sequence MQTNLLKPKA…EQLAVFAQLE (235 aa). Residues 253-333 form an alpha C-terminal domain (alpha-CTD) region; sequence FDPILLRPVD…NWPPQGLDKR (81 aa).

Belongs to the RNA polymerase alpha chain family. Homodimer. The RNAP catalytic core consists of 2 alpha, 1 beta, 1 beta' and 1 omega subunit. When a sigma factor is associated with the core the holoenzyme is formed, which can initiate transcription.

It carries out the reaction RNA(n) + a ribonucleoside 5'-triphosphate = RNA(n+1) + diphosphate. Its function is as follows. DNA-dependent RNA polymerase catalyzes the transcription of DNA into RNA using the four ribonucleoside triphosphates as substrates. The protein is DNA-directed RNA polymerase subunit alpha of Methylibium petroleiphilum (strain ATCC BAA-1232 / LMG 22953 / PM1).